Here is a 470-residue protein sequence, read N- to C-terminus: Nuclear receptor ROR-beta (470 aa).

Positions 18 to 93 form a DNA-binding region, nuclear receptor; that stretch reads VIPCKICGDK…LGMSRDAVKF (76 aa). 2 NR C4-type zinc fingers span residues 21–41 and 57–81; these read CKIC…CEGC and CPRQ…LQKC. Positions 104-117 are enriched in basic and acidic residues; the sequence is LYAEVQKHQQRLQE. The tract at residues 104–127 is disordered; it reads LYAEVQKHQQRLQEQRQQQSGEAE. Positions 222–460 constitute an NR LBD domain; sequence EIDRIAQNII…TLFPPLYKEL (239 aa). The short motif at 456–461 is the AF-2 element; it reads LYKELF.

The protein belongs to the nuclear hormone receptor family. NR1 subfamily. In terms of assembly, monomer. Interacts with CRX. Isoform 2 expressed with circadian rhythm in eye and pineal gland. Isoform 1 expressed in retina cortex, thalamus, and hypothalamus.

It is found in the nucleus. The protein localises to the nucleoplasm. Functionally, nuclear receptor that binds DNA as a monomer to ROR response elements (RORE) containing a single core motif half-site 5'-AGGTCA-3' preceded by a short A-T-rich sequence. Considered to have intrinsic transcriptional activity, have some natural ligands such as all-trans retinoic acid (ATRA) and other retinoids which act as inverse agonists repressing the transcriptional activity. Required for normal postnatal development of rod and cone photoreceptor cells. Modulates rod photoreceptors differentiation at least by inducing the transcription factor NRL-mediated pathway. In cone photoreceptor cells, regulates transcription of OPN1SW. Involved in the regulation of the period length and stability of the circadian rhythm. May control cytoarchitectural patterning of neocortical neurons during development. May act in a dose-dependent manner to regulate barrel formation upon innervation of layer IV neurons by thalamocortical axons. May play a role in the suppression of osteoblastic differentiation through the inhibition of RUNX2 transcriptional activity. In terms of biological role, critical for hindlimb motor control and for the differentiation of amacrine and horizontal cells in the retina. Regulates the expression of PTF1A synergistically with FOXN4. The polypeptide is Nuclear receptor ROR-beta (Rorb) (Rattus norvegicus (Rat)).